A 158-amino-acid polypeptide reads, in one-letter code: SsrA-binding protein (158 aa).

This sequence belongs to the SmpB family.

It localises to the cytoplasm. Required for rescue of stalled ribosomes mediated by trans-translation. Binds to transfer-messenger RNA (tmRNA), required for stable association of tmRNA with ribosomes. tmRNA and SmpB together mimic tRNA shape, replacing the anticodon stem-loop with SmpB. tmRNA is encoded by the ssrA gene; the 2 termini fold to resemble tRNA(Ala) and it encodes a 'tag peptide', a short internal open reading frame. During trans-translation Ala-aminoacylated tmRNA acts like a tRNA, entering the A-site of stalled ribosomes, displacing the stalled mRNA. The ribosome then switches to translate the ORF on the tmRNA; the nascent peptide is terminated with the 'tag peptide' encoded by the tmRNA and targeted for degradation. The ribosome is freed to recommence translation, which seems to be the essential function of trans-translation. The polypeptide is SsrA-binding protein (Glaesserella parasuis serovar 5 (strain SH0165) (Haemophilus parasuis)).